The primary structure comprises 219 residues: Formate dehydrogenase 2 subunit beta (cytochrome c-553) (219 aa).

Residues 3 to 32 form the 4Fe-4S ferredoxin-type 1 domain; the sequence is KAFLIDTTRCTACRGCQLACKEWHDLPANV. [4Fe-4S] cluster contacts are provided by Cys-12, Cys-15, Cys-18, Cys-22, Cys-74, Cys-77, Cys-82, Cys-124, Cys-141, Cys-144, Cys-156, and Cys-160. Residues 132–171 enclose the 4Fe-4S ferredoxin-type 2 domain; that stretch reads DPKTKRITKCDMCFDRVSAGMQPICVKTCPTGTMAFGERD.

Heterotrimer of cytochrome c3 FDH2C and formate dehydrogenase FDH2 alpha and beta subunits that forms the FdhABC(3) complex. The cofactor is [4Fe-4S] cluster.

It localises to the periplasm. Functionally, beta chain of the formate dehydrogenase (FDH) that catalyzes the reversible two-electron oxidation of formate to carbon dioxide. The beta chain is an electron transfer unit. In Nitratidesulfovibrio vulgaris (strain ATCC 29579 / DSM 644 / CCUG 34227 / NCIMB 8303 / VKM B-1760 / Hildenborough) (Desulfovibrio vulgaris), this protein is Formate dehydrogenase 2 subunit beta (cytochrome c-553).